Consider the following 397-residue polypeptide: Acetate kinase 2 (397 aa).

Residue N10 participates in Mg(2+) binding. Position 17 (K17) interacts with ATP. R90 is a binding site for substrate. The active-site Proton donor/acceptor is the D147. ATP is bound by residues 207–211 (HLGNG), 281–283 (DAR), and 329–333 (GIGEN). Position 385 (E385) interacts with Mg(2+).

This sequence belongs to the acetokinase family. Homodimer. It depends on Mg(2+) as a cofactor. Mn(2+) serves as cofactor.

The protein resides in the cytoplasm. It catalyses the reaction acetate + ATP = acetyl phosphate + ADP. It functions in the pathway metabolic intermediate biosynthesis; acetyl-CoA biosynthesis; acetyl-CoA from acetate: step 1/2. In terms of biological role, catalyzes the formation of acetyl phosphate from acetate and ATP. Can also catalyze the reverse reaction. The chain is Acetate kinase 2 from Vibrio cholerae serotype O1 (strain ATCC 39315 / El Tor Inaba N16961).